The following is a 420-amino-acid chain: Fasciclin-like arabinogalactan protein 8 (420 aa).

The N-terminal stretch at 1–25 (MAASQTFSLLAFTFSLLAFASTVSS) is a signal peptide. FAS1 domains follow at residues 26–172 (HNIT…DAPI) and 186–326 (SLSN…DNVL). Residues Asn27, Asn128, Asn162, Asn189, and Asn273 are each glycosylated (N-linked (GlcNAc...) asparagine). The disordered stretch occupies residues 335-394 (SKSPSPAPAPEPVTAPTPSPADAPSPTAASPPAPPTDESPESAPSDSPTGSANSKSANAA). Residues 339-371 (SPAPAPEPVTAPTPSPADAPSPTAASPPAPPTD) show a composition bias toward pro residues. The GPI-anchor amidated asparagine moiety is linked to residue Asn392. The propeptide at 393–420 (AAVGVSTPSLFTALVTIAAIAVSVSLCS) is removed in mature form.

This sequence belongs to the fasciclin-like AGP family. As to expression, expressed mainly in flowers and to a lesser extent in leaves and roots.

The protein resides in the cell membrane. May be a cell surface adhesion protein. The polypeptide is Fasciclin-like arabinogalactan protein 8 (FLA8) (Arabidopsis thaliana (Mouse-ear cress)).